The primary structure comprises 164 residues: NADH-quinone oxidoreductase subunit I 1 (164 aa).

4Fe-4S ferredoxin-type domains are found at residues 54–84 (LRRY…IEAG) and 95–124 (VRYD…EGPN). The [4Fe-4S] cluster site is built by C64, C67, C70, C74, C104, C107, C110, and C114.

It belongs to the complex I 23 kDa subunit family. NDH-1 is composed of 14 different subunits. Subunits NuoA, H, J, K, L, M, N constitute the membrane sector of the complex. [4Fe-4S] cluster is required as a cofactor.

The protein localises to the cell inner membrane. The catalysed reaction is a quinone + NADH + 5 H(+)(in) = a quinol + NAD(+) + 4 H(+)(out). NDH-1 shuttles electrons from NADH, via FMN and iron-sulfur (Fe-S) centers, to quinones in the respiratory chain. The immediate electron acceptor for the enzyme in this species is believed to be ubiquinone. Couples the redox reaction to proton translocation (for every two electrons transferred, four hydrogen ions are translocated across the cytoplasmic membrane), and thus conserves the redox energy in a proton gradient. This chain is NADH-quinone oxidoreductase subunit I 1, found in Rhizobium meliloti (strain 1021) (Ensifer meliloti).